Here is a 309-residue protein sequence, read N- to C-terminus: Tagatose-6-phosphate kinase (309 aa).

This sequence belongs to the carbohydrate kinase PfkB family. LacC subfamily.

It carries out the reaction D-tagatofuranose 6-phosphate + ATP = D-tagatofuranose 1,6-bisphosphate + ADP + H(+). It functions in the pathway carbohydrate metabolism; D-tagatose 6-phosphate degradation; D-glyceraldehyde 3-phosphate and glycerone phosphate from D-tagatose 6-phosphate: step 1/2. This chain is Tagatose-6-phosphate kinase, found in Streptococcus pyogenes serotype M12 (strain MGAS2096).